The following is a 382-amino-acid chain: Lipid-A-disaccharide synthase (382 aa).

This sequence belongs to the LpxB family.

It catalyses the reaction 2-N,3-O-bis[(3R)-3-hydroxytetradecanoyl]-alpha-D-glucosaminyl 1-phosphate + UDP-2-N,3-O-bis[(3R)-3-hydroxytetradecanoyl]-alpha-D-glucosamine = lipid A disaccharide (E. coli) + UDP + H(+). The catalysed reaction is a lipid X + a UDP-2-N,3-O-bis[(3R)-3-hydroxyacyl]-alpha-D-glucosamine = a lipid A disaccharide + UDP + H(+). It functions in the pathway glycolipid biosynthesis; lipid IV(A) biosynthesis; lipid IV(A) from (3R)-3-hydroxytetradecanoyl-[acyl-carrier-protein] and UDP-N-acetyl-alpha-D-glucosamine: step 5/6. In terms of biological role, condensation of UDP-2,3-diacylglucosamine and 2,3-diacylglucosamine-1-phosphate to form lipid A disaccharide, a precursor of lipid A, a phosphorylated glycolipid that anchors the lipopolysaccharide to the outer membrane of the cell. This chain is Lipid-A-disaccharide synthase, found in Escherichia coli O45:K1 (strain S88 / ExPEC).